We begin with the raw amino-acid sequence, 198 residues long: Molybdenum cofactor guanylyltransferase (198 aa).

GTP-binding positions include 14–16 (LAG), lysine 27, aspartate 73, and aspartate 103. Aspartate 103 provides a ligand contact to Mg(2+).

Belongs to the MobA family. In terms of assembly, monomer. Requires Mg(2+) as cofactor.

Its subcellular location is the cytoplasm. The catalysed reaction is Mo-molybdopterin + GTP + H(+) = Mo-molybdopterin guanine dinucleotide + diphosphate. Its function is as follows. Transfers a GMP moiety from GTP to Mo-molybdopterin (Mo-MPT) cofactor (Moco or molybdenum cofactor) to form Mo-molybdopterin guanine dinucleotide (Mo-MGD) cofactor. The polypeptide is Molybdenum cofactor guanylyltransferase (Pseudomonas aeruginosa (strain LESB58)).